A 944-amino-acid polypeptide reads, in one-letter code: Protein unc-45 homolog A (944 aa).

A disordered region spans residues 1–25 (MTVSGPGTPEPRPSDPGASSAEELR). TPR repeat units lie at residues 21–54 (AEEL…GATP), 58–91 (AILH…DGGD), and 92–125 (VKAL…EPKN). Lys-70 bears the N6-acetyllysine mark. Residue Lys-483 is modified to N6-acetyllysine.

As to quaternary structure, interacts with PGR isoforms A and B as well as with NR3C1 in the absence of ligand, and with HSP90AB1. Binding to HSP90AB1 involves 2 UNC45A monomers per HSP90AB1 dimer.

It localises to the cytoplasm. Its subcellular location is the perinuclear region. It is found in the nucleus. Its function is as follows. May act as co-chaperone for HSP90 (Potential). Prevents the stimulation of HSP90AB1 ATPase activity by AHSA1. Positive factor in promoting PGR function in the cell. May be necessary for proper folding of myosin (Potential). Necessary for normal cell proliferation. Necessary for normal myotube formation and myosin accumulation during muscle cell development. May play a role in erythropoiesis in stroma cells in the spleen. This is Protein unc-45 homolog A (Unc45a) from Rattus norvegicus (Rat).